A 950-amino-acid chain; its full sequence is Kinase suppressor of Ras 2 (950 aa).

Residues 239–296 are disordered; that stretch reads PPLESGHRSLPPSPRQRHAVRTPPRTPNIVTTVTPPGTPPMRKKNKLKPPGTPPPSSR. Residues 259 to 273 are compositionally biased toward low complexity; sequence RTPPRTPNIVTTVTP. Threonine 272 and threonine 276 each carry phosphothreonine. A Phorbol-ester/DAG-type zinc finger spans residues 412 to 456; it reads KHRFSTKYWMSQTCTVCGKGMLFGLKCKNCKLKCHNKCTKEAPPC. Positions 413, 425, 428, 438, 441, 446, 449, and 456 each coordinate Zn(2+). The residue at position 474 (serine 474) is a Phosphoserine; by MARK3. Residue threonine 497 is modified to Phosphothreonine. The segment at 498–556 is disordered; the sequence is LPKTNKINKDHIPVPYQPDSSSNPSSTTSSTPSSPAPPLPPSATPPSPLHPSPQCTRQQ. Positions 517 to 530 are enriched in low complexity; it reads SSSNPSSTTSSTPS. Residues 531 to 548 show a composition bias toward pro residues; sequence SPAPPLPPSATPPSPLHP. Positions 666-931 constitute a Protein kinase domain; it reads LEIGELIGKG…TKLMDMLEKL (266 aa). Residue 672–680 participates in ATP binding; it reads IGKGRFGQV. Residue aspartate 786 is the Proton donor/acceptor of the active site. Residues lysine 788 and aspartate 803 each coordinate ATP.

It belongs to the protein kinase superfamily. TKL Ser/Thr protein kinase family. Heterodimerizes (via N-terminus) with BRAF (via N-terminus) in a MAP2K1/MEK1-dependent manner. Interacts with BRAF; this increases the low intrinsic protein kinase activity of KSR2. Interacts with MAP2K1, forming a heterodimer that can dimerize to form a heterotetramer. Interacts with MAP3K8, MAPK, RAS and RAF. In terms of processing, phosphorylated on Ser-474 by MARK3. In terms of tissue distribution, mainly expressed in brain and kidney.

It is found in the cytoplasm. Its subcellular location is the membrane. The catalysed reaction is L-seryl-[protein] + ATP = O-phospho-L-seryl-[protein] + ADP + H(+). It carries out the reaction L-threonyl-[protein] + ATP = O-phospho-L-threonyl-[protein] + ADP + H(+). Its activity is regulated as follows. Kinase activity is inhibited by ASC24. Location-regulated scaffold connecting MEK to RAF. Has very low protein kinase activity and can phosphorylate MAP2K1 at several Ser and Thr residues with very low efficiency (in vitro). Acts as MAP2K1/MEK1-dependent allosteric activator of BRAF; upon binding to MAP2K1/MEK1, dimerizes with BRAF and promotes BRAF-mediated phosphorylation of MAP2K1/MEK1. Interaction with BRAF enhances KSR2-mediated phosphorylation of MAP2K1 (in vitro). Blocks MAP3K8 kinase activity and MAP3K8-mediated signaling. Acts as a negative regulator of MAP3K3-mediated activation of ERK, JNK and NF-kappa-B pathways, inhibiting MAP3K3-mediated interleukin-8 production. This is Kinase suppressor of Ras 2 from Homo sapiens (Human).